A 254-amino-acid polypeptide reads, in one-letter code: Low affinity immunoglobulin gamma Fc region receptor III-A (254 aa).

An N-terminal signal peptide occupies residues 1-20; it reads MWQLLLPTALLLLVSAGMRA. Ig-like C2-type domains are found at residues 24 to 105 and 107 to 189; these read PKAV…LEVH and GWLL…VNIT. Disulfide bonds link cysteine 47–cysteine 89 and cysteine 128–cysteine 172. Asparagine 187 is a glycosylation site (N-linked (GlcNAc...) asparagine). The chain crosses the membrane as a helical span at residues 207–229; that stretch reads YQVSFCLVMVLLFAVDTGLYFSV. The disordered stretch occupies residues 234–254; that stretch reads PSSTSDWKDHKFKWSKDPQDK. Basic and acidic residues predominate over residues 239 to 254; the sequence is DWKDHKFKWSKDPQDK.

In terms of assembly, forms a heterooligomeric complex with ITAM-containing signaling subunits, either a homodimer of CD247, a homodimer of FCER1G or a heterodimer of CD247 and FCER1G, to form a functional receptor complex. Interacts (via transmembrane domain) with signaling subunits; this interaction is a prerequisite for receptor complex expression on the cell surface and intracellular signal transduction. Binds the Fc region of antigen-complexed IgG with a preference for IgG1 and IgG3 isotypes. Interacts with CD2; this interaction is involved in NK cell activation and cytotoxicity. Interacts with S100A4; this interaction inhibits PKC-dependent phosphorylation of FCGR3A. Post-translationally, glycosylated. Glycosylation plays an inhibitory role in the interaction with IgG1 and IgG2. In terms of processing, undergoes rapid ectodomain shedding upon NK cell stimulation. The soluble form is produced by a proteolytic cleavage mediated by ADAM17. Repeated stimulation causes receptor shedding, a mechanism that allows for increased NK cell motility and detachment from opsonized target cells while avoiding activation-induced NK cell apoptosis. Lymphocytes and monocytes.

The protein resides in the cell membrane. The protein localises to the secreted. Receptor for the invariable Fc fragment of immunoglobulin gamma (IgG). Optimally activated upon binding of clustered antigen-IgG complexes displayed on cell surfaces, triggers lysis of antibody-coated cells, a process known as antibody-dependent cellular cytotoxicity (ADCC). Does not bind free monomeric IgG, thus avoiding inappropriate effector cell activation in the absence of antigenic trigger. Mediates IgG effector functions on natural killer (NK) cells. Binds antigen-IgG complexes generated upon infection and triggers NK cell-dependent cytokine production and degranulation to limit viral load and propagation. Involved in the generation of memory-like adaptive NK cells capable to produce high amounts of IFNG and to efficiently eliminate virus-infected cells via ADCC. Regulates NK cell survival and proliferation, in particular by preventing NK cell progenitor apoptosis. Fc-binding subunit that associates with CD247 and/or FCER1G adapters to form functional signaling complexes. Following the engagement of antigen-IgG complexes, triggers phosphorylation of immunoreceptor tyrosine-based activation motif (ITAM)-containing adapters with subsequent activation of phosphatidylinositol 3-kinase signaling and sustained elevation of intracellular calcium that ultimately drive NK cell activation. The ITAM-dependent signaling coupled to receptor phosphorylation by PKC mediates robust intracellular calcium flux that leads to production of pro-inflammatory cytokines, whereas in the absence of receptor phosphorylation it mainly activates phosphatidylinositol 3-kinase signaling leading to cell degranulation. Costimulates NK cells and trigger lysis of target cells independently of IgG binding. Mediates the antitumor activities of therapeutic antibodies. Upon ligation on monocytes triggers TNFA-dependent ADCC of IgG-coated tumor cells. Mediates enhanced ADCC in response to afucosylated IgGs. The protein is Low affinity immunoglobulin gamma Fc region receptor III-A (FCGR3A) of Papio anubis (Olive baboon).